Consider the following 512-residue polypeptide: Cytoplasmic tRNA 2-thiolation protein 2-B (512 aa).

The interval 196–215 is disordered; the sequence is VTDSDSPGSSDKMYQSTCSR. Residues 199 to 214 are compositionally biased toward polar residues; the sequence is SDSPGSSDKMYQSTCS.

Belongs to the CTU2/NCS2 family.

The protein resides in the cytoplasm. It functions in the pathway tRNA modification; 5-methoxycarbonylmethyl-2-thiouridine-tRNA biosynthesis. Functionally, plays a central role in 2-thiolation of mcm(5)S(2)U at tRNA wobble positions of tRNA(Lys), tRNA(Glu) and tRNA(Gln). May act by forming a heterodimer with ctu1/atpbd3 that ligates sulfur from thiocarboxylated urm1 onto the uridine of tRNAs at wobble position. The chain is Cytoplasmic tRNA 2-thiolation protein 2-B (ctu2-b) from Xenopus laevis (African clawed frog).